The chain runs to 206 residues: Histidine biosynthesis bifunctional protein HisIE (206 aa).

Residues 1-117 (MGSNEVATGD…SCFPSAPGQF (117 aa)) are phosphoribosyl-AMP cyclohydrolase. A phosphoribosyl-ATP pyrophosphohydrolase region spans residues 118–206 (LGSLDALVAE…AAALLESRHQ (89 aa)).

This sequence in the N-terminal section; belongs to the PRA-CH family. The protein in the C-terminal section; belongs to the PRA-PH family.

Its subcellular location is the cytoplasm. It carries out the reaction 1-(5-phospho-beta-D-ribosyl)-ATP + H2O = 1-(5-phospho-beta-D-ribosyl)-5'-AMP + diphosphate + H(+). The enzyme catalyses 1-(5-phospho-beta-D-ribosyl)-5'-AMP + H2O = 1-(5-phospho-beta-D-ribosyl)-5-[(5-phospho-beta-D-ribosylamino)methylideneamino]imidazole-4-carboxamide. The protein operates within amino-acid biosynthesis; L-histidine biosynthesis; L-histidine from 5-phospho-alpha-D-ribose 1-diphosphate: step 2/9. It participates in amino-acid biosynthesis; L-histidine biosynthesis; L-histidine from 5-phospho-alpha-D-ribose 1-diphosphate: step 3/9. The protein is Histidine biosynthesis bifunctional protein HisIE of Xanthomonas axonopodis pv. citri (strain 306).